The following is a 482-amino-acid chain: 23S rRNA (uracil(1939)-C(5))-methyltransferase RlmD (482 aa).

4 residues coordinate [4Fe-4S] cluster: C85, C95, C98, and C177. S-adenosyl-L-methionine is bound by residues Q285, F314, N319, E335, N370, and D391. C438 functions as the Nucleophile in the catalytic mechanism.

It belongs to the class I-like SAM-binding methyltransferase superfamily. RNA M5U methyltransferase family. RlmD subfamily.

It carries out the reaction uridine(1939) in 23S rRNA + S-adenosyl-L-methionine = 5-methyluridine(1939) in 23S rRNA + S-adenosyl-L-homocysteine + H(+). Its function is as follows. Catalyzes the formation of 5-methyl-uridine at position 1939 (m5U1939) in 23S rRNA. The sequence is that of 23S rRNA (uracil(1939)-C(5))-methyltransferase RlmD from Acidovorax sp. (strain JS42).